A 988-amino-acid polypeptide reads, in one-letter code: GVSSRARRPPGSSRSSRRGVTSELAWTTHPETGWEEVSGYDEAMNPIRTYQVCNVREANQNNWLRTKFIQRQDVQRVYVELKFTVRDCNSIPNIPGSCKETFNLFYYESDTDSASANSPFWMENPYIKVDTIAPDESFSKLESGRVNTKVRSFGPLSKNGFYLAFQDLGACMSLISVRAFYKKCSNTIAGFAIFPETLTGAEPTSLVIAPGTCIPNAVEVSVPLKLYCNGDGEWMVPVGACTCAAGYEPAMKDTQCQACGPGTFKSKQGEGPCSPCPPNSRTTAGAATVCICRSGFFRADADPADSACTSVPSAPRSVISNVNETSLVLEWSEPQDAGGRDDLLYNVICKKCSVERRLCSRCDDNVEFVPRQLGLTGLTERRIYISKVMAHPQYTFEIQAVNGISSKSPYPPHFASVNITTNQAAPSAVPTMHLHSSTGNSMTLSWTPPERPNGIILDYEIKYSEKQGQGDGIANTVTSQKNSVRLDGLKANARYMVQVRARTVAGYGRYSLPTEFQTTAEDGSTSKTFQELPLIVGSATAGLLFVIVVVIIAIVCFRKGMVTEQLLSSPLGRKQRNSTDPEYTEKLQQYVTPGMKVYIDPFTYEDPNEAVREFAKEIDISCVKIEEVIGAGEFGEVCRGRLKLPGRREIFVAIKTLKVGYTERQRRDFLSEASIMGQFDHPNIIHLEGVVTKSRPVMIITEFMENCALDSFLRLNDGQFTVIQLVGMLRGIAAGMKYLSEMNYVHRDLAARNILVNSNLVCKVSDFGLSRFLEDDPADPTYTSSLGGKIPIRWTAPEAIAYRKFTSASDVWSYGIVMWEVMSYGERPYWDMSNQDVINAVEQDYRLPPPMDCPTALHQLMLDCWVRDRNLRPKFAQIVNTLDKLIRNAASLKVIASVQSGVSQPLLDRTVPDYTTFTTVGDWLDAIKMGRYKENFVNAGFASFDLVAQMTAEDLLRIGVTLAGHQKKILSSIQDMRLQMNQTLPVQV.

The tract at residues 1–24 is disordered; sequence GVSSRARRPPGSSRSSRRGVTSEL. At 1–534 the chain is on the extracellular side; the sequence is GVSSRARRPP…TSKTFQELPL (534 aa). The Eph LBD domain maps to 11-189; that stretch reads GSSRSSRRGV…FYKKCSNTIA (179 aa). Cys-53 and Cys-171 are disulfide-bonded. 2 consecutive Fibronectin type-III domains span residues 311–424 and 425–522; these read VPSA…TNQA and APSA…TAED. N-linked (GlcNAc...) asparagine glycans are attached at residues Asn-323 and Asn-418. Residues 535-555 form a helical membrane-spanning segment; the sequence is IVGSATAGLLFVIVVVIIAIV. At 556–988 the chain is on the cytoplasmic side; sequence CFRKGMVTEQ…QMNQTLPVQV (433 aa). Tyr-604 bears the Phosphotyrosine; by autocatalysis mark. Residues 623 to 886 form the Protein kinase domain; the sequence is VKIEEVIGAG…QIVNTLDKLI (264 aa). Residues 629–637 and Lys-655 contribute to the ATP site; that span reads IGAGEFGEV. The active-site Proton acceptor is Asp-748. Residues 915 to 979 enclose the SAM domain; that stretch reads TTFTTVGDWL…LSSIQDMRLQ (65 aa). Residues 986–988 carry the PDZ-binding motif; that stretch reads VQV.

It belongs to the protein kinase superfamily. Tyr protein kinase family. Ephrin receptor subfamily. Heterotetramer upon binding of the ligand. The heterotetramer is composed of an ephrin dimer and a receptor dimer. Oligomerization is probably required to induce biological responses. In terms of processing, phosphorylated. Autophosphorylates upon ligand-binding. Autophosphorylation on Tyr-604 is required for interaction with SH2 domain-containing proteins. As to expression, present in 10-day embryonic brain and body tissues. Prominent expression in kidney. Lower expression in lung, and barely detectable in brain, liver, heart, skeletal muscle and thymus.

It localises to the cell membrane. It is found in the cell projection. The protein localises to the dendrite. It carries out the reaction L-tyrosyl-[protein] + ATP = O-phospho-L-tyrosyl-[protein] + ADP + H(+). Functionally, receptor tyrosine kinase which binds promiscuously transmembrane ephrin-B family ligands residing on adjacent cells, leading to contact-dependent bidirectional signaling into neighboring cells. The signaling pathway downstream of the receptor is referred to as forward signaling while the signaling pathway downstream of the ephrin ligand is referred to as reverse signaling. Generally has an overlapping and redundant function with EPHB2. Like EPHB2, functions in axon guidance during development. In addition to its role in axon guidance also plays an important redundant role with other ephrin-B receptors in development and maturation of dendritic spines and the formation of excitatory synapses. May control other aspects of development through regulation of cell migration and positioning. The protein is Ephrin type-B receptor 3 (EPHB3) of Gallus gallus (Chicken).